A 2731-amino-acid polypeptide reads, in one-letter code: Teneurin-1 (2731 aa).

Residues 1–72 (MEQTDCKPYQ…KRKDVEKSTQ (72 aa)) form a disordered region. Residues 1-318 (MEQTDCKPYQ…KPYRCCNWKC (318 aa)) enclose the Teneurin N-terminal domain. The Cytoplasmic segment spans residues 1 to 324 (MEQTDCKPYQ…NWKCTALSAT (324 aa)). Residues 44–55 (ETLHEYNQELRR) are compositionally biased toward basic and acidic residues. Positions 62–65 (RKRK) match the Nuclear localization signal (NLS) motif. Ser105 carries the phosphoserine modification. Thr109 carries the phosphothreonine modification. The residue at position 116 (Ser116) is a Phosphoserine. The interval 175 to 241 (DSAQDMQSSP…PAPPTSTQDS (67 aa)) is disordered. The segment covering 178–189 (QDMQSSPHNQFT) has biased composition (polar residues). Residues 192–201 (PLPPPPPPPH) show a composition bias toward pro residues. Over residues 214 to 224 (DSLQRRSMTTR) the composition is skewed to polar residues. Positions 290–297 (PPPRPLPR) match the Required for interaction with SORBS1 (Ten-1 ICD form) motif. The chain crosses the membrane as a helical span at residues 325–345 (AITVTLALLLAYVIAVHLFGL). At 346-2731 (TWQLQPVGQI…FMRQSEIGRR (2386 aa)) the chain is on the extracellular side. N-linked (GlcNAc...) asparagine glycosylation occurs at Asn432. EGF-like domains lie at 527–558 (IMDDCSTNCNGNGECISGHCHCFPGFLGPDCA), 559–590 (RDSCPVLCGGNGEYEKGHCVCRNGWKGPECDV), 591–623 (PEEQCIDPTCFGHGTCIMGVCICVPGYKGEICE), 624–656 (EEDCLDPMCSSHGICVKGECHCSTGWGGVNCET), 657–690 (PLPICQEQCSGHGTFLLDTGVCSCDPKWTGSDCS), 691–720 (TELCTMECGSHGVCSRGICQCEEGWVGPTC), 721–752 (EERSCHSHCAEHGQCKDGKCECSPGWEGDHCT), and 760–795 (VRDGCPGLCFGNGRCTLDQNGWHCVCQVGWSGTGCN). 22 disulfides stabilise this stretch: Cys531-Cys541, Cys535-Cys546, Cys548-Cys557, Cys566-Cys577, Cys579-Cys588, Cys595-Cys606, Cys600-Cys611, Cys613-Cys622, Cys627-Cys638, Cys632-Cys643, Cys645-Cys654, Cys665-Cys678, Cys680-Cys689, Cys694-Cys704, Cys698-Cys709, Cys711-Cys720, Cys725-Cys735, Cys729-Cys740, Cys742-Cys751, Cys764-Cys774, Cys768-Cys783, and Cys785-Cys794. Residues Asn904 and Asn1083 are each glycosylated (N-linked (GlcNAc...) asparagine). 5 NHL repeats span residues 1193 to 1218 (LFAPVALASGPDGSVYVGDFNFVRRI), 1298 to 1342 (SHCG…NAVI), 1357 to 1408 (LSCD…IAGR), 1420 to 1464 (FLVS…VTTN), and 1487 to 1530 (CFSG…ISKN). Residues 1540 to 1559 (YEIASPADQELYQFTVNGTH) form a YD 1 repeat. Residues Asn1556 and Asn1573 are each glycosylated (N-linked (GlcNAc...) asparagine). YD repeat units lie at residues 1576–1596 (YNAEGDLGAITSSNGNSVHIR), 1614–1638 (YWLTISSNGVLKRVSAQGYNLALMT), 1639–1660 (YPGNTGLLATKSNENGWTTVYE), and 1661–1681 (YDPEGHLTNATFPTGEVSSFH). Residues Asn1669, Asn1705, Asn1743, Asn1763, Asn1787, and Asn1848 are each glycosylated (N-linked (GlcNAc...) asparagine). YD repeat units follow at residues 1851-1870 (YSPSGLVTFIQRGTWNEKME), 1871-1891 (YDQSGKIISRTWADGKIWSYT), 1892-1910 (YLEKSVMLLLHSQRRYIFE), 1911-1931 (YDQSDCLLSVTMPSMVRHSLQ), 1939-1955 (YRNIYTPPDSSTSFIQD), 1956-1975 (YSRDGRLLQTLHLGTGRRVL), 1976-1995 (YKYTKQARLSEILYDTTQVT), 1998-2018 (YEESSGVIKTIHLMHDGFICT), 2021-2041 (YRQTGPLIGRQIFRFSEEGLV), 2091-2111 (YDLNQVITTTVMKHTKIFNAN), and 2119-2139 (YEILKAIAYWMTIQYDNMGRM). An N-linked (GlcNAc...) asparagine glycan is attached at Asn2151. YD repeat units follow at residues 2159–2179 (YDADGQLQTVSVNDKIQWRYS), 2180–2200 (YDLNGNINLLSHGNSARLTPL), 2202–2222 (YDLRDRITRLGEIQYKMDEDG), 2234–2254 (YNSNGLLQKAYNKVSGWTVQY), and 2256–2276 (YDGLGRRVASKSSLGQHLQFF). Asn2291 carries N-linked (GlcNAc...) asparagine glycosylation. YD repeat units lie at residues 2302–2319 (YDLQGHLIAMELSSGEEY) and 2320–2343 (YVACDNMGTPLAVFSSRGQVIKEI). Residue Ser2586 is modified to Phosphoserine. Residue Asn2608 is glycosylated (N-linked (GlcNAc...) asparagine).

Belongs to the tenascin family. Teneurin subfamily. In terms of assembly, homodimer; disulfide-linked. Heterodimer with either TENM2 or TENM3. May also form heterodimer with TENM4. Ten-1 ICD interacts with SORBS1 (via third SH3 domain). Interacts with MBD1 isoform 2. Ten-1 ICD interacts with HINT1. Post-translationally, once secreted, may also be cleaved to give rise to the TCAP-1 form. Derives from the plasma membrane form by proteolytic processing. Further proteolytic cleavage may generate 11.9 and 4.7 kDa bioactive peptides. In terms of tissue distribution, isoform 1 and isoform 2 are expressed in the brain. Isoform 2 is expressed in the granular layer of the dentate gyrus and the pyramidal layer (Py) of the CA1, CA2 and CA3 of the hippocampus (at protein level). Expressed in the cortex, thalamus, CA1, CA2, CA3, dentate gyrus and granular layer of the hippocampus. Weakly expressed in kidney, testis and lung.

Its subcellular location is the cell membrane. It is found in the cytoplasm. The protein resides in the secreted. It localises to the nucleus. The protein localises to the nucleus speckle. Its subcellular location is the nucleus matrix. It is found in the cytoskeleton. Involved in neural development, regulating the establishment of proper connectivity within the nervous system. May function as a cellular signal transducer. Functionally, plays a role in the regulation of neuroplasticity in the limbic system. Mediates a rapid reorganization of actin- and tubulin-based cytoskeleton elements with an increase in dendritic arborization and spine density formation of neurons in the hippocampus and amygdala. Induces BDNF transcription inhibition in neurons. Activates the mitogen-activated protein (MAP) kinase 2 (MEK2) and extracellular signal-regulated kinase (ERK) cascade. Also acts as a bioactive neuroprotective peptide on limbic neurons of the brain and regulates stress-induced behavior: attenuates alkalosis-associated necrotic cell death and the effects of corticotropin-releasing factor (CRF) on c-fos/FOS induction and on the reinstatement of cocaine seeking. Its function is as follows. Induces gene transcription activation. This is Teneurin-1 (Tenm1) from Mus musculus (Mouse).